The sequence spans 295 residues: Secreted frizzled-related protein 2 (295 aa).

The N-terminal stretch at 1–24 (MPRGPASLLLLVLASHCCLGSARG) is a signal peptide. The FZ domain maps to 35–155 (YKRSNCKPIP…PQDNDLCIPL (121 aa)). Intrachain disulfides connect Cys40–Cys103, Cys50–Cys96, Cys87–Cys125, Cys114–Cys152, Cys118–Cys142, Cys172–Cys245, Cys175–Cys247, and Cys190–Cys295. The NTR domain occupies 172–295 (CEACKTKNED…ISRSIRKLQC (124 aa)).

Belongs to the secreted frizzled-related protein (sFRP) family. Highly expressed in the eye. Weaker expression in heart and lung.

It localises to the secreted. Soluble frizzled-related proteins (sFRPS) function as modulators of Wnt signaling through direct interaction with Wnts. They have a role in regulating cell growth and differentiation in specific cell types. SFRP2 may be important for eye retinal development and for myogenesis. The protein is Secreted frizzled-related protein 2 of Mus musculus (Mouse).